We begin with the raw amino-acid sequence, 699 residues long: D-(-)-3-hydroxybutyrate oligomer hydrolase (699 aa).

Residues 1–33 (MTAIRGGSRRAPGLALALLGGVLLGACHGDENA) form the signal peptide. Residue Ser-311 is the Charge relay system of the active site.

This sequence belongs to the D-(-)-3-hydroxybutyrate oligomer hydrolase family.

The protein resides in the secreted. It carries out the reaction (3R)-hydroxybutanoate dimer + H2O = 2 (R)-3-hydroxybutanoate + H(+). It participates in lipid metabolism; butanoate metabolism. In terms of biological role, participates in the degradation of poly-3-hydroxybutyrate (PHB). It works downstream of poly(3-hydroxybutyrate) depolymerase, hydrolyzing D(-)-3-hydroxybutyrate oligomers of various length (3HB-oligomers) into 3HB-monomers. The chain is D-(-)-3-hydroxybutyrate oligomer hydrolase from Burkholderia pseudomallei (strain 1106a).